The sequence spans 245 residues: Biosynthetic peptidoglycan transglycosylase (245 aa).

The chain crosses the membrane as a helical span at residues 20–42; the sequence is VYAGSVFAGAWLATQLFYLAQIA.

Belongs to the glycosyltransferase 51 family.

It is found in the cell inner membrane. The enzyme catalyses [GlcNAc-(1-&gt;4)-Mur2Ac(oyl-L-Ala-gamma-D-Glu-L-Lys-D-Ala-D-Ala)](n)-di-trans,octa-cis-undecaprenyl diphosphate + beta-D-GlcNAc-(1-&gt;4)-Mur2Ac(oyl-L-Ala-gamma-D-Glu-L-Lys-D-Ala-D-Ala)-di-trans,octa-cis-undecaprenyl diphosphate = [GlcNAc-(1-&gt;4)-Mur2Ac(oyl-L-Ala-gamma-D-Glu-L-Lys-D-Ala-D-Ala)](n+1)-di-trans,octa-cis-undecaprenyl diphosphate + di-trans,octa-cis-undecaprenyl diphosphate + H(+). It functions in the pathway cell wall biogenesis; peptidoglycan biosynthesis. Its function is as follows. Peptidoglycan polymerase that catalyzes glycan chain elongation from lipid-linked precursors. The polypeptide is Biosynthetic peptidoglycan transglycosylase (Burkholderia orbicola (strain MC0-3)).